The chain runs to 55 residues: Large ribosomal subunit protein bL33 (55 aa).

It belongs to the bacterial ribosomal protein bL33 family.

The sequence is that of Large ribosomal subunit protein bL33 from Bradyrhizobium sp. (strain BTAi1 / ATCC BAA-1182).